The primary structure comprises 579 residues: Protein LYRIC (579 aa).

Over 1–48 the chain is Lumenal; it reads MAARSWQDELAQQAEEGSARLRELLSVGLGFLRTELGLDLGLEPKRYP. The tract at residues 1-71 is activation of NF-kappa-B; it reads MAARSWQDEL…LLLFLLGYGW (71 aa). The chain crosses the membrane as a helical span at residues 49 to 69; sequence GWVILVGTGALGLLLLFLLGY. Topologically, residues 70 to 579 are cytoplasmic; it reads GWAAACAGAR…KKKKKARRET (510 aa). Residues 72 to 168 form an interaction with BCCIP region; sequence AAACAGARKK…EKSKKNKKKS (97 aa). A disordered region spans residues 78–222; sequence ARKKRRSPPR…SGSLDSTIPG (145 aa). The segment at 100 to 204 is interaction with RELA; it reads DDLAQLKNLR…ISHREKRQQR (105 aa). Residues 108 to 126 are compositionally biased toward basic and acidic residues; the sequence is LRSEEQKKKNRKKLPEKPK. A compositionally biased stretch (basic residues) spans 159–168; it reads EKSKKNKKKS. S179 bears the Phosphoserine mark. Positions 197 to 207 are enriched in basic residues; it reads HREKRQQRKRD. S215 and S250 each carry phosphoserine. K263 is modified (N6-acetyllysine). Positions 277 to 579 are disordered; sequence NLTVNGGGWS…KKKKKARRET (303 aa). S297, S303, and S308 each carry phosphoserine. The segment covering 317-329 has biased composition (polar residues); it reads SAWTQDTGDTNAN. A phosphoserine mark is found at S341 and S366. Polar residues-rich tracts occupy residues 351 to 369, 380 to 391, and 410 to 420; these read EPVS…SRNQ, NGLSSADPSSDW, and LKSQEPISNDQ. The segment at 378–440 is lung-homing for mammary tumors; the sequence is GLNGLSSADP…EGALPTGKSK (63 aa). S412 and S423 each carry phosphoserine. Residues 421 to 431 are compositionally biased toward basic and acidic residues; it reads KVSDDDKEKGE. Positions 438 to 448 are enriched in basic residues; sequence KSKKKKKKKKK. Over residues 449–470 the composition is skewed to basic and acidic residues; that stretch reads QGEDNSHTQDTEDLEKDTREEL. Phosphoserine is present on residues S454, S475, S491, and S493. Polar residues-rich tracts occupy residues 517–533 and 546–565; these read PSIT…SSQV and NAKQ…NWES. S565 bears the Phosphoserine mark. Residues 568–579 show a composition bias toward basic residues; the sequence is QIKKKKKARRET.

As to quaternary structure, interacts with BCCIP, CREBBP/CBP and RELA/p65. In terms of tissue distribution, in the mammary gland, expressed at the apical surface of epithelial cells lining ducts, as well as in the mammary fat pad. Not detected in the spleen, kidney, lung, or skin; minute amounts seen in the liver. Expressed in Purkinje neurons in the early postnatal and adult cerebellum. Overexpressed in mammary tumors (at protein level).

Its subcellular location is the endoplasmic reticulum membrane. The protein resides in the nucleus membrane. It localises to the cell junction. The protein localises to the tight junction. It is found in the nucleus. Its subcellular location is the nucleolus. The protein resides in the cytoplasm. It localises to the perinuclear region. Down-regulates SLC1A2/EAAT2 promoter activity when expressed ectopically. Activates the nuclear factor kappa-B (NF-kappa-B) transcription factor. Promotes anchorage-independent growth of immortalized melanocytes and astrocytes which is a key component in tumor cell expansion. Promotes lung metastasis and also has an effect on bone and brain metastasis, possibly by enhancing the seeding of tumor cells to the target organ endothelium. Induces chemoresistance. This is Protein LYRIC (Mtdh) from Mus musculus (Mouse).